The chain runs to 137 residues: Ribosomal RNA small subunit methyltransferase G (137 aa).

Residues glycine 75, phenylalanine 80, and 126–127 contribute to the S-adenosyl-L-methionine site; that span reads AE.

This sequence belongs to the methyltransferase superfamily. RNA methyltransferase RsmG family.

The protein resides in the cytoplasm. Its function is as follows. Specifically methylates the N7 position of a guanine in 16S rRNA. In Mycoplasma mycoides subsp. mycoides SC (strain CCUG 32753 / NCTC 10114 / PG1), this protein is Ribosomal RNA small subunit methyltransferase G.